The chain runs to 226 residues: Phosphoglycolate phosphatase (226 aa).

Asp-10 functions as the Nucleophile in the catalytic mechanism. Mg(2+) is bound by residues Asp-10, Asp-12, and Asp-175.

The protein belongs to the HAD-like hydrolase superfamily. CbbY/CbbZ/Gph/YieH family. Mg(2+) is required as a cofactor.

It carries out the reaction 2-phosphoglycolate + H2O = glycolate + phosphate. The protein operates within organic acid metabolism; glycolate biosynthesis; glycolate from 2-phosphoglycolate: step 1/1. Its function is as follows. Specifically catalyzes the dephosphorylation of 2-phosphoglycolate. Is involved in the dissimilation of the intracellular 2-phosphoglycolate formed during the DNA repair of 3'-phosphoglycolate ends, a major class of DNA lesions induced by oxidative stress. This is Phosphoglycolate phosphatase from Vibrio cholerae serotype O1 (strain ATCC 39315 / El Tor Inaba N16961).